We begin with the raw amino-acid sequence, 280 residues long: Divalent cation/proton antiporter GDT1 (280 aa).

Residues 1–3 (MGN) lie on the Cytoplasmic side of the membrane. The helical transmembrane segment at 4–24 (MIKKASLIALLPLFTAAAAAA) threads the bilayer. Topologically, residues 25–45 (TDAETSMESGSSSHLKSFLMS) are vacuolar. Residues 46 to 66 (VSMIGLSEIGDKTFLIAALMA) form a helical membrane-spanning segment. Over 67 to 71 (MRHKR) the chain is Cytoplasmic. A helical membrane pass occupies residues 72–92 (VLVFSAAATSLAIMTILSGVV). Over 93-104 (GHSAVAFLSERY) the chain is Vacuolar. Residues 105 to 125 (TAFFAGILFLVFGYKLTMEGL) form a helical membrane-spanning segment. The Cytoplasmic segment spans residues 126–183 (EMSKDAGVEEEMAEVEEEIAIKDMNQDMDDVEKGGDTAYDKQLKNASIGKKIVHRIRE). The chain crosses the membrane as a helical span at residues 184–204 (LASFMFSPVWVQIFLMVFLGE). The Vacuolar segment spans residues 205-222 (LGDRSQISIIAMATDSDY). The chain crosses the membrane as a helical span at residues 223-243 (WYVIAGAVIGHAICSGLAVVG). At 244–255 (GKLLATRISIRT) the chain is on the cytoplasmic side. Residues 256–276 (ITLASSLLFFIFALMYIYQAF) traverse the membrane as a helical segment. The Vacuolar portion of the chain corresponds to 277–280 (TTQD).

This sequence belongs to the GDT1 family.

The protein localises to the golgi apparatus. Its subcellular location is the cis-Golgi network membrane. The catalysed reaction is Ca(2+)(in) + n H(+)(out) = Ca(2+)(out) + n H(+)(in). It catalyses the reaction Mn(2+)(in) + n H(+)(out) = Mn(2+)(out) + n H(+)(in). Divalent cation:proton antiporter that exchanges calcium or manganese ions for protons across the Golgi membrane. Mediates the reversible transport of calcium or manganese to the Golgi lumen driven by the proton gradient and possibly the membrane potential generated by V-ATPase. Provides calcium or manganese cofactors to resident Golgi enzymes and contributes to the maintenance of an acidic luminal Golgi pH required for proper functioning of the secretory pathway. The transport stoichiometry remains to be elucidated. This Saccharomyces cerevisiae (strain ATCC 204508 / S288c) (Baker's yeast) protein is Divalent cation/proton antiporter GDT1.